The primary structure comprises 277 residues: ATP-dependent Clp protease proteolytic subunit, mitochondrial (277 aa).

A mitochondrion-targeting transit peptide spans 1–56; that stretch reads MWPGILVGGARVASCRYPALGPRLAAHFPAQRPPQRTLQNGLALQRCLHATATRAL. The active-site Nucleophile is Ser153. The active site involves His178. Lys200 carries the N6-succinyllysine modification. N6-acetyllysine is present on Lys211. Residues 246–277 form a disordered region; that stretch reads VHPPQDGEDEPTLVQKEPVEAAPAAEPVPAST. Residues 265-277 show a composition bias toward low complexity; sequence EAAPAAEPVPAST.

Belongs to the peptidase S14 family. As to quaternary structure, fourteen CLPP subunits assemble into 2 heptameric rings which stack back to back to give a disk-like structure with a central cavity. Component of the ClpXP complex formed by the assembly of two CLPP heptameric rings with two CLPX hexameric rings, giving rise to a symmetrical structure with two central CLPP rings flanked by a CLPX ring at either end of the complex. In terms of tissue distribution, detected in liver (at protein level). Predominantly expressed in skeletal muscle. Intermediate levels in heart, liver and pancreas. Low in brain, placenta, lung and kidney.

The protein resides in the mitochondrion matrix. The catalysed reaction is Hydrolysis of proteins to small peptides in the presence of ATP and magnesium. alpha-casein is the usual test substrate. In the absence of ATP, only oligopeptides shorter than five residues are hydrolyzed (such as succinyl-Leu-Tyr-|-NHMec, and Leu-Tyr-Leu-|-Tyr-Trp, in which cleavage of the -Tyr-|-Leu- and -Tyr-|-Trp bonds also occurs).. Protease component of the ClpXP complex that cleaves peptides and various proteins in an ATP-dependent process. Has low peptidase activity in the absence of CLPX. The ClpXP complex can degrade CSN1S1, CSN2 and CSN3, as well as synthetic peptides (in vitro) and may be responsible for a fairly general and central housekeeping function rather than for the degradation of specific substrates. Cleaves PINK1 in the mitochondrion. This Homo sapiens (Human) protein is ATP-dependent Clp protease proteolytic subunit, mitochondrial.